The primary structure comprises 189 residues: Large ribosomal subunit protein bL9 (189 aa).

This sequence belongs to the bacterial ribosomal protein bL9 family.

Binds to the 23S rRNA. This is Large ribosomal subunit protein bL9 from Cereibacter sphaeroides (strain ATCC 17023 / DSM 158 / JCM 6121 / CCUG 31486 / LMG 2827 / NBRC 12203 / NCIMB 8253 / ATH 2.4.1.) (Rhodobacter sphaeroides).